An 85-amino-acid polypeptide reads, in one-letter code: uncharacterized protein (85 aa).

S22 bears the Phosphoserine mark.

The protein resides in the cytoplasm. The protein localises to the nucleus. This is an uncharacterized protein from Saccharomyces cerevisiae (strain ATCC 204508 / S288c) (Baker's yeast).